The sequence spans 583 residues: Ras-specific guanine nucleotide-releasing factor RalGPS2 (583 aa).

The Ras-GEF domain occupies 49–287 (TPEEYAGQIT…YKLSLKIEPG (239 aa)). A disordered region spans residues 283-314 (KIEPGTSTPRSAASREDLVGPEVGASPQSGRK). A phosphoserine mark is found at Ser293, Ser296, Ser308, and Ser311. Positions 324–327 (PQTP) match the PXXP motif. Residue Thr326 is modified to Phosphothreonine. Residues Ser329 and Ser343 each carry the phosphoserine modification. Thr361 carries the phosphothreonine modification. The interval 372–406 (DDSVMEPHAPSRGQAESSTLSSGISIGSSDGSELS) is disordered. Ser374 carries the phosphoserine modification. Positions 387–403 (ESSTLSSGISIGSSDGS) are enriched in low complexity. At Ser422 the chain carries Phosphoserine. Positions 457 to 569 (AVTIQGVLRR…WFKHLSAACQ (113 aa)) constitute a PH domain. The segment at 459–583 (TIQGVLRRKT…QVPTNLMTFE (125 aa)) is required for stimulation of nucleotide exchange by RALA.

As to quaternary structure, interacts with the SH3 domains of GRB2 and PLCG1. Interacts with RALA.

It localises to the cytoplasm. It is found in the cell membrane. Its function is as follows. Guanine nucleotide exchange factor for the small GTPase RALA. May be involved in cytoskeletal organization. May also be involved in the stimulation of transcription in a Ras-independent fashion. The polypeptide is Ras-specific guanine nucleotide-releasing factor RalGPS2 (RALGPS2) (Homo sapiens (Human)).